Reading from the N-terminus, the 159-residue chain is 2-C-methyl-D-erythritol 2,4-cyclodiphosphate synthase (159 aa).

A divalent metal cation is bound by residues Asp8 and His10. 4-CDP-2-C-methyl-D-erythritol 2-phosphate-binding positions include 8–10 and 34–35; these read DVH and HS. A divalent metal cation is bound at residue His42. 4-CDP-2-C-methyl-D-erythritol 2-phosphate is bound by residues 56 to 58, 61 to 65, 100 to 106, 132 to 135, Phe139, and Arg142; these read DIG, FPDTD, AQAPRML, and TTTE.

This sequence belongs to the IspF family. As to quaternary structure, homotrimer. The cofactor is a divalent metal cation.

It carries out the reaction 4-CDP-2-C-methyl-D-erythritol 2-phosphate = 2-C-methyl-D-erythritol 2,4-cyclic diphosphate + CMP. The protein operates within isoprenoid biosynthesis; isopentenyl diphosphate biosynthesis via DXP pathway; isopentenyl diphosphate from 1-deoxy-D-xylulose 5-phosphate: step 4/6. Functionally, involved in the biosynthesis of isopentenyl diphosphate (IPP) and dimethylallyl diphosphate (DMAPP), two major building blocks of isoprenoid compounds. Catalyzes the conversion of 4-diphosphocytidyl-2-C-methyl-D-erythritol 2-phosphate (CDP-ME2P) to 2-C-methyl-D-erythritol 2,4-cyclodiphosphate (ME-CPP) with a corresponding release of cytidine 5-monophosphate (CMP). The sequence is that of 2-C-methyl-D-erythritol 2,4-cyclodiphosphate synthase from Escherichia coli O45:K1 (strain S88 / ExPEC).